The chain runs to 259 residues: Pimeloyl-[acyl-carrier protein] methyl ester esterase (259 aa).

Residues Trp-18, 78–79 (SL), and 139–143 (FLALD) contribute to the substrate site. Ser-78 (nucleophile) is an active-site residue. Active-site residues include Asp-203 and His-231. A substrate-binding site is contributed by His-231.

It belongs to the AB hydrolase superfamily. Carboxylesterase BioH family. As to quaternary structure, monomer.

Its subcellular location is the cytoplasm. The catalysed reaction is 6-carboxyhexanoyl-[ACP] methyl ester + H2O = 6-carboxyhexanoyl-[ACP] + methanol + H(+). It functions in the pathway cofactor biosynthesis; biotin biosynthesis. The physiological role of BioH is to remove the methyl group introduced by BioC when the pimeloyl moiety is complete. It allows to synthesize pimeloyl-ACP via the fatty acid synthetic pathway through the hydrolysis of the ester bonds of pimeloyl-ACP esters. This Stenotrophomonas maltophilia (strain R551-3) protein is Pimeloyl-[acyl-carrier protein] methyl ester esterase.